A 288-amino-acid chain; its full sequence is Fibroblast growth factor 2 (288 aa).

The propeptide occupies 1-142 (MVGVGGGDVE…TMAAGSITTL (142 aa)). Positions 1–156 (MVGVGGGDVE…EDGGSGAFPP (156 aa)) are disordered. Residues 72–84 (ERPSGSRLGDHGR) are compositionally biased toward basic and acidic residues. 3 positions are modified to omega-N-methylarginine; alternate: arginine 108, arginine 110, and arginine 112. 3 positions are modified to symmetric dimethylarginine; alternate: arginine 108, arginine 110, and arginine 112. Residues 113-132 (GTAAPRAAPAARGSRPGPAG) are compositionally biased toward low complexity. Asparagine 169 is a binding site for heparin. Residues 179-181 (DGR) carry the Cell attachment site; atypical motif. A Phosphotyrosine; by TEC modification is found at tyrosine 215. The Cell attachment site; atypical signature appears at 221 to 223 (DGR). Lysine 228 participates in a covalent cross-link: Glycyl lysine isopeptide (Lys-Gly) (interchain with G-Cter in SUMO1). Residues 261–277 (KRTGQYKLGSKTGPGQK) are heparin-binding.

Belongs to the heparin-binding growth factors family. Monomer. Homodimer. Interacts with FGFR1, FGFR2, FGFR3 and FGFR4. Affinity between fibroblast growth factors (FGFs) and their receptors is increased by heparan sulfate glycosaminoglycans that function as coreceptors. Interacts with CSPG4, FGFBP1 and TEC. Found in a complex with FGFBP1, FGF1 and FGF2. Interacts with FGFBP3. Interacts with integrin ITGAV:ITGB3; the interaction is required for FGF2 signaling. Interacts with SNORC (via the extracellular domain). Interacts with glypican GPC3. Phosphorylation at Tyr-215 regulates FGF2 unconventional secretion.

It is found in the secreted. It localises to the nucleus. Functionally, acts as a ligand for FGFR1, FGFR2, FGFR3 and FGFR4. Also acts as an integrin ligand which is required for FGF2 signaling. Binds to integrin ITGAV:ITGB3. Plays an important role in the regulation of cell survival, cell division, cell differentiation and cell migration. Functions as a potent mitogen in vitro. Can induce angiogenesis. Mediates phosphorylation of ERK1/2 and thereby promotes retinal lens fiber differentiation. The protein is Fibroblast growth factor 2 of Pan troglodytes (Chimpanzee).